Consider the following 309-residue polypeptide: L-aminoadipate-semialdehyde dehydrogenase-phosphopantetheinyl transferase (309 aa).

CoA contacts are provided by residues R47, 86–91, and 108–111; these read RTSKGK and NISH. Mg(2+)-binding residues include D129 and E181. 181 to 185 is a CoA binding site; that stretch reads ESFIK.

This sequence belongs to the P-Pant transferase superfamily. AcpS family. As to quaternary structure, monomer. The cofactor is Mg(2+).

The protein resides in the cytoplasm. It localises to the cytosol. It carries out the reaction apo-[ACP] + CoA = holo-[ACP] + adenosine 3',5'-bisphosphate + H(+). The enzyme catalyses apo-[ACP] + acetyl-CoA = acetyl-[ACP] + adenosine 3',5'-bisphosphate + H(+). In terms of biological role, catalyzes the post-translational modification of target proteins by phosphopantetheine. Can transfer the 4'-phosphopantetheine moiety from coenzyme A, regardless of whether the CoA is presented in the free thiol form or as an acetyl thioester, to a serine residue of a broad range of acceptors including the acyl carrier domain of FASN. This is L-aminoadipate-semialdehyde dehydrogenase-phosphopantetheinyl transferase (Aasdhppt) from Rattus norvegicus (Rat).